The chain runs to 449 residues: Probable glycine dehydrogenase (decarboxylating) subunit 1 (449 aa).

Belongs to the GcvP family. N-terminal subunit subfamily. In terms of assembly, the glycine cleavage system is composed of four proteins: P, T, L and H. In this organism, the P 'protein' is a heterodimer of two subunits.

It catalyses the reaction N(6)-[(R)-lipoyl]-L-lysyl-[glycine-cleavage complex H protein] + glycine + H(+) = N(6)-[(R)-S(8)-aminomethyldihydrolipoyl]-L-lysyl-[glycine-cleavage complex H protein] + CO2. Functionally, the glycine cleavage system catalyzes the degradation of glycine. The P protein binds the alpha-amino group of glycine through its pyridoxal phosphate cofactor; CO(2) is released and the remaining methylamine moiety is then transferred to the lipoamide cofactor of the H protein. In Solibacter usitatus (strain Ellin6076), this protein is Probable glycine dehydrogenase (decarboxylating) subunit 1.